Here is a 702-residue protein sequence, read N- to C-terminus: Ferrioxamine B receptor (702 aa).

The N-terminal stretch at M1–A30 is a signal peptide. The region spanning P55 to R168 is the TBDR plug domain. In terms of domain architecture, TBDR beta-barrel spans D173–F702.

The protein belongs to the TonB-dependent receptor family.

The protein resides in the cell outer membrane. Its function is as follows. Ferrioxamine binding and uptake, in association with the TonB protein. The chain is Ferrioxamine B receptor (foxA) from Salmonella typhimurium (strain LT2 / SGSC1412 / ATCC 700720).